The chain runs to 944 residues: Protein translocase subunit SecA (944 aa).

ATP-binding positions include glutamine 96, 114 to 118 (GEGKT), and aspartate 554.

Belongs to the SecA family. In terms of assembly, monomer and homodimer. Part of the essential Sec protein translocation apparatus which comprises SecA, SecYEG and auxiliary proteins SecDF. Other proteins may also be involved.

The protein localises to the cell inner membrane. It is found in the cytoplasm. It catalyses the reaction ATP + H2O + cellular proteinSide 1 = ADP + phosphate + cellular proteinSide 2.. Its function is as follows. Part of the Sec protein translocase complex. Interacts with the SecYEG preprotein conducting channel. Has a central role in coupling the hydrolysis of ATP to the transfer of proteins into and across the cell membrane, serving as an ATP-driven molecular motor driving the stepwise translocation of polypeptide chains across the membrane. This Hydrogenobaculum sp. (strain Y04AAS1) protein is Protein translocase subunit SecA.